The following is a 310-amino-acid chain: MRELVRPARLAPGARVAVVAPSGPVPEERLQAGLDVLRGWDLDPVVAPHVLDRHDTFDYLAGTDADRAADLQAAWCDPAVDAVLCARGGYGVQRMADLLDWEAMRAAGPKVFVGFSDITALHEAFATRLGLVTLHGPMAAGIDFIKNARAQEHLRATLFAPETVRVITSGGTPLVPGRARGVTLGGCLALLAADLGTPHARPGARGGLLCLEDVGEETYRIDRYLTQLLRSGWLDGVGGVLLGSWAQCEPYERLRPLLADRLGGLGVPVVEDFGFGHCEGALTVPFGVPAELDADTGTLTLDRPALCSPG.

Ser116 functions as the Nucleophile in the catalytic mechanism. Catalysis depends on charge relay system residues Glu212 and His277.

Belongs to the peptidase S66 family.

This chain is Putative carboxypeptidase SCO6489, found in Streptomyces coelicolor (strain ATCC BAA-471 / A3(2) / M145).